Reading from the N-terminus, the 124-residue chain is Large ribosomal subunit protein eL31 (124 aa).

Phosphotyrosine is present on Y102.

Belongs to the eukaryotic ribosomal protein eL31 family.

The polypeptide is Large ribosomal subunit protein eL31 (RpL31) (Drosophila melanogaster (Fruit fly)).